The chain runs to 356 residues: GMP reductase (356 aa).

NADP(+)-binding positions include 26–27 (SR), K78, 132–134 (DVA), and 183–184 (IG). 3 residues coordinate K(+): G184, G186, and C189. C189 functions as the Thioimidate intermediate in the catalytic mechanism. Residue T191 is the Proton donor/acceptor of the active site. R192 is a K(+) binding site. GMP is bound by residues 222-224 (DGG), 245-246 (GG), 271-273 (GMS), and 289-293 (RASEG). Residues M272, 288–289 (YR), and 317–320 (SACT) contribute to the NADP(+) site.

Belongs to the IMPDH/GMPR family.

It catalyses the reaction IMP + NH4(+) + NADP(+) = GMP + NADPH + 2 H(+). Functionally, catalyzes the irreversible NADPH-dependent deamination of GMP to IMP. It functions in the conversion of nucleobase, nucleoside and nucleotide derivatives of G to A nucleotides, and in maintaining the intracellular balance of A and G nucleotides. The polypeptide is GMP reductase (Ascaris suum (Pig roundworm)).